We begin with the raw amino-acid sequence, 122 residues long: Large ribosomal subunit protein bL12 (122 aa).

This sequence belongs to the bacterial ribosomal protein bL12 family. As to quaternary structure, homodimer. Part of the ribosomal stalk of the 50S ribosomal subunit. Forms a multimeric L10(L12)X complex, where L10 forms an elongated spine to which 2 to 4 L12 dimers bind in a sequential fashion. Binds GTP-bound translation factors.

Its function is as follows. Forms part of the ribosomal stalk which helps the ribosome interact with GTP-bound translation factors. Is thus essential for accurate translation. The sequence is that of Large ribosomal subunit protein bL12 from Dichelobacter nodosus (strain VCS1703A).